Consider the following 503-residue polypeptide: Maturase K (503 aa).

This sequence belongs to the intron maturase 2 family. MatK subfamily.

It localises to the plastid. The protein localises to the chloroplast. Usually encoded in the trnK tRNA gene intron. Probably assists in splicing its own and other chloroplast group II introns. The chain is Maturase K from Eucalyptus globulus subsp. globulus (Tasmanian blue gum).